A 527-amino-acid polypeptide reads, in one-letter code: Peptide chain release factor 3 (527 aa).

The 270-residue stretch at 9–278 (NKRRTFAIIS…GLTQWAPKPQ (270 aa)) folds into the tr-type G domain. GTP is bound by residues 18-25 (SHPDAGKT), 86-90 (DTPGH), and 140-143 (NKLD).

The protein belongs to the TRAFAC class translation factor GTPase superfamily. Classic translation factor GTPase family. PrfC subfamily.

It is found in the cytoplasm. Its function is as follows. Increases the formation of ribosomal termination complexes and stimulates activities of RF-1 and RF-2. It binds guanine nucleotides and has strong preference for UGA stop codons. It may interact directly with the ribosome. The stimulation of RF-1 and RF-2 is significantly reduced by GTP and GDP, but not by GMP. The protein is Peptide chain release factor 3 of Haemophilus influenzae (strain 86-028NP).